The following is a 98-amino-acid chain: Large ribosomal subunit protein uL23 (98 aa).

It belongs to the universal ribosomal protein uL23 family. As to quaternary structure, part of the 50S ribosomal subunit. Contacts protein L29, and trigger factor when it is bound to the ribosome.

Functionally, one of the early assembly proteins it binds 23S rRNA. One of the proteins that surrounds the polypeptide exit tunnel on the outside of the ribosome. Forms the main docking site for trigger factor binding to the ribosome. The sequence is that of Large ribosomal subunit protein uL23 from Streptococcus equi subsp. equi (strain 4047).